Consider the following 875-residue polypeptide: Phospholipase DDHD1 (875 aa).

Disordered regions lie at residues 1 to 30, 101 to 153, and 206 to 231; these read MNYP…LGSD, LRYY…GAAA, and RAQD…SVED. Phosphoserine occurs at positions 8 and 11. The span at 130–140 shows a compositional bias: gly residues; it reads SGGGGAAGGGP. Positions 217 to 228 are enriched in low complexity; sequence GPASPAGPASSS. Ser540 is an active-site residue. One can recognise a DDHD domain in the interval 614 to 861; sequence LKFKVENFFC…ALFLLTFMYK (248 aa). Residue Ser726 is modified to Phosphoserine. The segment at 770-804 is disordered; the sequence is RSSASQPSETSRDSIEDEKKPVASPPMTTVATQTL. Basic and acidic residues predominate over residues 779-790; sequence TSRDSIEDEKKP. The span at 795 to 804 shows a compositional bias: polar residues; sequence PMTTVATQTL.

It belongs to the PA-PLA1 family. As to quaternary structure, forms homooligomers and, to a much smaller extent, heterooligomers with DDHD2. Interacts with SEC23A and SEC24C. As to expression, expressed in mature testis.

It localises to the cytoplasm. It carries out the reaction a 1,2-diacyl-sn-glycero-3-phosphate + H2O = a 2-acyl-sn-glycerol 3-phosphate + a fatty acid + H(+). It catalyses the reaction a 1,2-diacyl-sn-glycero-3-phospho-(1D-myo-inositol) + H2O = a 2-acyl-sn-glycero-3-phospho-D-myo-inositol + a fatty acid + H(+). The catalysed reaction is 1-octadecanoyl-2-(5Z,8Z,11Z,14Z-eicosatetraenoyl)-sn-glycero-3-phospho-(1D-myo-inositol) + H2O = 2-(5Z,8Z,11Z,14Z-eicosatetraenoyl)-sn-glycero-3-phospho-(1D-myo-inositol) + octadecanoate + H(+). The enzyme catalyses a 1-acyl-2-(5Z,8Z,11Z,14Z-eicosatetraenoyl)-sn-glycero-3-phospho-(1D-myo-inositol) + H2O = 2-(5Z,8Z,11Z,14Z-eicosatetraenoyl)-sn-glycero-3-phospho-(1D-myo-inositol) + a fatty acid + H(+). It carries out the reaction 1,2-dihexadecanoyl-sn-glycero-3-phospho-(1D-myo-inositol) + H2O = 2-hexadecanoyl-sn-glycero-3-phospho-(1D-myo-inositol) + hexadecanoate + H(+). It catalyses the reaction 1,2-di-(9Z-octadecenoyl)-sn-glycero-3-phosphate + H2O = 2-(9Z-octadecenoyl)-sn-glycero-3-phosphate + (9Z)-octadecenoate + H(+). The catalysed reaction is a 1-acyl-2-(5Z,8Z,11Z,14Z)-eicosatetraenoyl-sn-glycero-3-phosphate + H2O = 2-(5Z,8Z,11Z,14Z-eicosatetraenoyl)-sn-glycero-3-phosphate + a fatty acid + H(+). The enzyme catalyses 1-hexadecanoyl-2-(9Z-octadecenoyl)-sn-glycero-3-phosphate + H2O = 2-(9Z-octadecenoyl)-sn-glycero-3-phosphate + hexadecanoate + H(+). It carries out the reaction 1-hexadecanoyl-2-(9Z-octadecenoyl)-sn-glycero-3-phospho-L-serine + H2O = 2-(9Z-octadecenoyl)-sn-glycero-3-phospho-L-serine + hexadecanoate + H(+). It catalyses the reaction 1,2-di-(5Z,8Z,11Z,14Z)-eicosatetraenoyl-sn-glycero-3-phosphate + H2O = 2-(5Z,8Z,11Z,14Z-eicosatetraenoyl)-sn-glycero-3-phosphate + (5Z,8Z,11Z,14Z)-eicosatetraenoate + H(+). The catalysed reaction is 1-octadecanoyl-2-(5Z,8Z,11Z,14Z-eicosatetraenoyl)-sn-glycero-3-phosphate + H2O = 2-(5Z,8Z,11Z,14Z-eicosatetraenoyl)-sn-glycero-3-phosphate + octadecanoate + H(+). The enzyme catalyses a 1,2-diacyl-sn-glycero-3-phosphocholine + H2O = a 2-acyl-sn-glycero-3-phosphocholine + a fatty acid + H(+). It carries out the reaction a 1,2-diacyl-sn-glycero-3-phosphoethanolamine + H2O = a 2-acyl-sn-glycero-3-phosphoethanolamine + a fatty acid + H(+). It catalyses the reaction a 1,2-diacyl-sn-glycero-3-phospho-L-serine + H2O = a 2-acyl-sn-glycero-3-phospho-L-serine + a fatty acid + H(+). The catalysed reaction is a 1,2-diacyl-sn-glycero-3-phospho-(1'-sn-glycerol) + H2O = 2-acyl-sn-glycero-3-phospho-(1'-sn-glycerol) + a fatty acid + H(+). The enzyme catalyses 1-hexadecanoyl-2-(9Z-octadecenoyl)-sn-glycero-3-phospho-(1'-sn-glycerol) + H2O = 2-(9Z-octadecenoyl)-sn-glycero-3-phospho-(1'-sn-glycerol) + hexadecanoate + H(+). It carries out the reaction 1-acyl-2-(5Z,8Z,11Z,14Z-eicosatetraenoyl)-sn-glycero-3-phosphocholine + H2O = 2-(5Z,8Z,11Z,14Z)-eicosatetraenoyl-sn-glycero-3-phosphocholine + a fatty acid + H(+). It catalyses the reaction 1-acyl-2-(5Z,8Z,11Z,14Z)-eicosatetraenoyl-sn-glycero-3-phosphoethanolamine + H2O = 2-(5Z,8Z,11Z,14Z)-eicosatetraenoyl-sn-glycero-3-phosphoethanolamine + a fatty acid + H(+). The catalysed reaction is 1-(9Z-octadecenoyl)-2-(7Z,10Z,13Z,16Z,19Z-docosapentaenoyl)-sn-glycero-3-phospho-1D-myo-inositol + H2O = 2-(7Z,10Z,13Z,16Z,19Z-docosapentaenoyl)-sn-glycero-3-phospho-1D-myo-inositol + (9Z)-octadecenoate + H(+). The enzyme catalyses 1-(9Z-octadecenoyl)-2-(5Z,8Z,11Z,14Z-eicosatetraenoyl)-sn-glycero-3-phospho-1D-myo-inositol + H2O = 2-(5Z,8Z,11Z,14Z-eicosatetraenoyl)-sn-glycero-3-phospho-(1D-myo-inositol) + (9Z)-octadecenoate + H(+). It carries out the reaction 1,2-di-(9Z-octadecenoyl)-sn-glycero-3-phospho-1D-myo-inositol + H2O = 2-(9Z-octadecenoyl)-sn-glycero-3-phospho-1D-myo-inositol + (9Z)-octadecenoate + H(+). It catalyses the reaction 1-(9Z-octadecenoyl)-2-(8Z,11Z,14Z-eicosatrienoyl)-sn-glycero-3-phospho-1D-myo-inositol + H2O = 2-(8Z,11Z,14Z-eicosatrienoyl)-sn-glycero-3-phospho-1D-myo-inositol + (9Z)-octadecenoate + H(+). The catalysed reaction is 1,2-di-(9Z-octadecenoyl)-sn-glycero-3-phosphocholine + H2O = (9Z-octadecenoyl)-sn-glycero-3-phosphocholine + (9Z)-octadecenoate + H(+). It participates in phospholipid metabolism; phosphatidylinositol metabolism. Its function is as follows. Phospholipase A1 (PLA1) that hydrolyzes ester bonds at the sn-1 position of glycerophospholipids producing a free fatty acid and a lysophospholipid. Prefers phosphatidate (1,2-diacyl-sn-glycero-3-phosphate, PA) as substrate in vitro, but can efficiently hydrolyze phosphatidylinositol (1,2-diacyl-sn-glycero-3-phospho-(1D-myo-inositol), PI), as well as a range of other glycerophospholipid substrates such as phosphatidylcholine (1,2-diacyl-sn-glycero-3-phosphocholine, PC), phosphatidylethanolamine (1,2-diacyl-sn-glycero-3-phosphoethanolamine, PE), phosphatidylserine (1,2-diacyl-sn-glycero-3-phospho-L-serine, PS) and phosphatidylglycerol (1,2-diacyl-sn-glycero-3-phospho-(1'-sn-glycerol), PG). Involved in the regulation of the endogenous content of polyunsaturated PI and PS lipids in the nervous system. Changes in these lipids extend to downstream metabolic products like PI phosphates PIP and PIP2, which play fundamental roles in cell biology. Regulates mitochondrial morphology. These dynamic changes may be due to PA hydrolysis at the mitochondrial surface. May play a regulatory role in spermatogenesis or sperm function. The polypeptide is Phospholipase DDHD1 (DDHD1) (Bos taurus (Bovine)).